The sequence spans 225 residues: UPF0758 protein AZOSEA04420 (225 aa).

The region spanning 102 to 225 (VFESPLAVRN…PLSFAERGLL (124 aa)) is the MPN domain. Zn(2+) contacts are provided by His-173, His-175, and Asp-186. The JAMM motif signature appears at 173 to 186 (HNHPSGAAEPSPAD).

This sequence belongs to the UPF0758 family.

The chain is UPF0758 protein AZOSEA04420 from Aromatoleum aromaticum (strain DSM 19018 / LMG 30748 / EbN1) (Azoarcus sp. (strain EbN1)).